The following is an 87-amino-acid chain: Pyocin-S2 immunity protein (87 aa).

This sequence belongs to the colicins ColE2/ColE8/ColE9 and pyocins S1/S2 family.

This is Pyocin-S2 immunity protein (imm2) from Pseudomonas aeruginosa (strain ATCC 15692 / DSM 22644 / CIP 104116 / JCM 14847 / LMG 12228 / 1C / PRS 101 / PAO1).